The sequence spans 313 residues: Ribosomal protein L11 methyltransferase (313 aa).

4 residues coordinate S-adenosyl-L-methionine: Thr-164, Gly-185, Asp-207, and Asn-249.

This sequence belongs to the methyltransferase superfamily. PrmA family.

Its subcellular location is the cytoplasm. It catalyses the reaction L-lysyl-[protein] + 3 S-adenosyl-L-methionine = N(6),N(6),N(6)-trimethyl-L-lysyl-[protein] + 3 S-adenosyl-L-homocysteine + 3 H(+). Functionally, methylates ribosomal protein L11. The protein is Ribosomal protein L11 methyltransferase of Clostridium botulinum (strain Alaska E43 / Type E3).